Consider the following 794-residue polypeptide: DNA ligase (794 aa).

Residues 1 to 47 are disordered; the sequence is MEEDLFSLAAGKQPSQQATNETAPRAGEARENAGTDHPGNAEDPAHR. Over residues 13 to 22 the composition is skewed to polar residues; that stretch reads QPSQQATNET. A compositionally biased stretch (basic and acidic residues) spans 27–47; that stretch reads GEARENAGTDHPGNAEDPAHR. NAD(+) contacts are provided by residues 73–77, 122–123, and E160; these read DAEYD and SI. The active-site N6-AMP-lysine intermediate is K162. NAD(+)-binding residues include R183, E219, K335, and K359. C457, C460, C475, and C480 together coordinate Zn(2+). The BRCT domain occupies 717-794; the sequence is IPAGSLSGKT…EEDFYKMIGN (78 aa).

The protein belongs to the NAD-dependent DNA ligase family. LigA subfamily. Mg(2+) is required as a cofactor. It depends on Mn(2+) as a cofactor.

It carries out the reaction NAD(+) + (deoxyribonucleotide)n-3'-hydroxyl + 5'-phospho-(deoxyribonucleotide)m = (deoxyribonucleotide)n+m + AMP + beta-nicotinamide D-nucleotide.. Functionally, DNA ligase that catalyzes the formation of phosphodiester linkages between 5'-phosphoryl and 3'-hydroxyl groups in double-stranded DNA using NAD as a coenzyme and as the energy source for the reaction. It is essential for DNA replication and repair of damaged DNA. The chain is DNA ligase from Akkermansia muciniphila (strain ATCC BAA-835 / DSM 22959 / JCM 33894 / BCRC 81048 / CCUG 64013 / CIP 107961 / Muc).